Reading from the N-terminus, the 611-residue chain is Serine protease FAM111A (611 aa).

The PIP-box motif lies at 16 to 28 (KCNMKIEHYFSPV). A Glycyl lysine isopeptide (Lys-Gly) (interchain with G-Cter in SUMO2) cross-link involves residue Lys-20. Ser-26 carries the phosphoserine modification. Glycyl lysine isopeptide (Lys-Gly) (interchain with G-Cter in SUMO2) cross-links involve residues Lys-30 and Lys-65. Positions 44–73 (ESRGDPRATTNTQAQRFHSPKKNPEDQTMP) are disordered. The tract at residues 336 to 611 (KVTKNSSSIK…DVEMMSDEDL (276 aa)) is interaction with SV40 large T antigen. Active-site charge relay system residues include His-385, Asp-439, and Ser-541.

Belongs to the FAM111 family. In terms of assembly, interacts (via PIP-box) with PCNA; then interaction is direct. (Microbial infection) Interacts with SV40 virus large T antigen and this interaction is required for efficient viral replication and sustained viral gene expression in restrictive cell types. As to quaternary structure, (Microbial infection) Interacts with vaccinia virus protein OPG079; this interaction promotes the degradation of OPG079. Autocatalytically cleaved; activating the protein. Autocatalytic cleavage takes place in trans.

It localises to the nucleus. The protein localises to the chromosome. Its subcellular location is the cytoplasm. Its function is as follows. Single-stranded DNA-binding serine protease that mediates the proteolytic cleavage of covalent DNA-protein cross-links (DPCs) during DNA synthesis, thereby playing a key role in maintaining genomic integrity. DPCs are highly toxic DNA lesions that interfere with essential chromatin transactions, such as replication and transcription, and which are induced by reactive agents, such as UV light or formaldehyde. Protects replication fork from stalling by removing DPCs, such as covalently trapped topoisomerase 1 (TOP1) adducts on DNA lesion, or poly(ADP-ribose) polymerase 1 (PARP1)-DNA complexes trapped by PARP inhibitors. Required for PCNA loading on replication sites. Promotes S-phase entry and DNA synthesis. Also acts as a restriction factor for some viruses including SV40 polyomavirus and vaccinia virus. Mechanistically, affects nuclear barrier function during viral replication by mediating the disruption of the nuclear pore complex (NPC) via its protease activity. In turn, interacts with vaccinia virus DNA-binding protein OPG079 in the cytoplasm and promotes its degradation without the need of its protease activity but through autophagy. In Homo sapiens (Human), this protein is Serine protease FAM111A.